Consider the following 239-residue polypeptide: Type III pantothenate kinase (239 aa).

ATP is bound at residue 6–13; the sequence is DAGNTRLK. Residues Y87 and 94–97 each bind substrate; that span reads GADR. D96 serves as the catalytic Proton acceptor. Residue T119 coordinates ATP. S169 contacts substrate.

It belongs to the type III pantothenate kinase family. In terms of assembly, homodimer. NH4(+) serves as cofactor. K(+) is required as a cofactor.

The protein localises to the cytoplasm. It carries out the reaction (R)-pantothenate + ATP = (R)-4'-phosphopantothenate + ADP + H(+). Its pathway is cofactor biosynthesis; coenzyme A biosynthesis; CoA from (R)-pantothenate: step 1/5. Functionally, catalyzes the phosphorylation of pantothenate (Pan), the first step in CoA biosynthesis. This is Type III pantothenate kinase from Laribacter hongkongensis (strain HLHK9).